We begin with the raw amino-acid sequence, 256 residues long: MLENKIIFVAGACGRIGKALCKKILQNKGIAILADINENHLSILKTELENEFKKELLSLRLDITSKESLNCAIDQAFEKYSKIDGFVNSSYPVGKDWGKIAYYEASYEQICESLNLHLGGFILASQEFVKFFKKQSYGNIINLSSIMGVFAPKFENYENTTMQSSLEYSVIKAGINHLGAWLAKELFNTNIRVNTLASGGILDNQANIFLEKYRKCCASKGMLDAEDICGTLVFLLSDESKFVTGQTLVVDDGWGL.

Ser145 is a binding site for substrate. The active-site Proton acceptor is Tyr168.

It belongs to the short-chain dehydrogenases/reductases (SDR) family.

Functionally, required for biosynthesis of LAH modification in the post-translational modification of Campylobacter coli flagellin. The chain is Post-translational flagellin modification protein A (ptmA) from Campylobacter coli.